Reading from the N-terminus, the 180-residue chain is Cytochrome b6-f complex subunit 4 (180 aa).

3 helical membrane-spanning segments follow: residues 36–56, 95–115, and 131–151; these read LSYI…GLAV, LLGV…PFLE, and TVSL…ALPI.

The protein belongs to the cytochrome b family. PetD subfamily. As to quaternary structure, the 4 large subunits of the cytochrome b6-f complex are cytochrome b6, subunit IV (17 kDa polypeptide, petD), cytochrome f and the Rieske protein, while the 4 small subunits are petG, petL, petM and petN. The complex functions as a dimer.

The protein resides in the plastid. It is found in the chloroplast thylakoid membrane. Its function is as follows. Component of the cytochrome b6-f complex, which mediates electron transfer between photosystem II (PSII) and photosystem I (PSI), cyclic electron flow around PSI, and state transitions. The sequence is that of Cytochrome b6-f complex subunit 4 from Pinus thunbergii (Japanese black pine).